Reading from the N-terminus, the 357-residue chain is UPF0283 membrane protein BMEA_A1074 (357 aa).

The interval 1-36 is disordered; that stretch reads MSDKTPRKPTAFRLEQPARVSAASEQEEPRRPRAVK. The segment covering 27-36 has biased composition (basic and acidic residues); sequence EEPRRPRAVK. 2 helical membrane-spanning segments follow: residues 78 to 98 and 109 to 129; these read ILFG…TEDL and LGWT…AIIL.

The protein belongs to the UPF0283 family.

Its subcellular location is the cell inner membrane. This is UPF0283 membrane protein BMEA_A1074 from Brucella melitensis biotype 2 (strain ATCC 23457).